The primary structure comprises 704 residues: Structure-specific endonuclease subunit SLX1 homolog (704 aa).

One can recognise a GIY-YIG domain in the interval 4–90; the sequence is RFHCVYLLTS…TASARLRHTI (87 aa). Disordered stretches follow at residues 157–180, 290–323, and 354–378; these read ESPRVGTQQHSQRSSSLQGQADGV, ASFASDSDDEDTRRLAPYCPSAGSSTPSPQRVRT, and GAALRSFSSPPPPRESSPRSASRPP. Polar residues-rich tracts occupy residues 161 to 175 and 311 to 320; these read VGTQQHSQRSSSLQG and AGSSTPSPQR. The SLX1-type zinc finger occupies 446-526; that stretch reads CSLCALPLQP…PSQPCPCPLC (81 aa). Disordered stretches follow at residues 601 to 629 and 650 to 671; these read VPGAASTVPAPTMHAGPARRDAPRVSSPI and ASLAALSPTSASPISRHNGHSN. Residues 650–662 show a composition bias toward low complexity; sequence ASLAALSPTSASP.

It belongs to the SLX1 family. As to quaternary structure, forms a heterodimer with a member of the SLX4 family. It depends on a divalent metal cation as a cofactor.

The protein resides in the nucleus. In terms of biological role, catalytic subunit of a heterodimeric structure-specific endonuclease that resolves DNA secondary structures generated during DNA repair and recombination. Has endonuclease activity towards branched DNA substrates, introducing single-strand cuts in duplex DNA close to junctions with ss-DNA. This Leishmania major protein is Structure-specific endonuclease subunit SLX1 homolog.